The chain runs to 503 residues: MEEFQGYLELDRSQQHDFLYPLIFREYIYALAHDHGLNRSILLDNVGYDNKSSLLIIKRLISRMYQQNHLIISANDSNPPQNWGYNKNLYCQMISEGFAVIVEIPFSLRLVSSLEGTETVKSYNLRSIHSIFPFLEDKFPHLNYGSDVLIPYPIHLEILVQTLRYWAKDPSSLHLLRLFLHDYYNLNSLITPNKSIFSKSNPRLFLLLYNSYVCEYESILLFLRNQSSHLQFTSSWIFFERIHFYEKIKYPVEEVFANDFPAILWFFKDPFMHYVRYQGKSILASKDTPLLMNKWKYYLVNLWQCHFYVWSQPGRIDINQLSKHSLDFLGYLSSIRPNLSVVRSQMLENSFIMDNAMKKFDTLVPIIPLIGSLAKVKFCNALGHPISKSTWADSSDFDIIDRFVRICRNLSHYYSGSSKKKSLYQIKYILRLSCVKTLARKHKSTVRTFLKRLGSKLLEEFFTEEEQILSLIFPRASSTLKRFYRERIWYLDIFCINDLVNHE.

Belongs to the intron maturase 2 family. MatK subfamily.

Its subcellular location is the plastid. It localises to the chloroplast. Usually encoded in the trnK tRNA gene intron. Probably assists in splicing its own and other chloroplast group II introns. The chain is Maturase K from Purshia tridentata (Antelope bitterbrush).